A 118-amino-acid polypeptide reads, in one-letter code: Large ribosomal subunit protein bL20 (118 aa).

Belongs to the bacterial ribosomal protein bL20 family.

In terms of biological role, binds directly to 23S ribosomal RNA and is necessary for the in vitro assembly process of the 50S ribosomal subunit. It is not involved in the protein synthesizing functions of that subunit. This Azotobacter vinelandii (strain DJ / ATCC BAA-1303) protein is Large ribosomal subunit protein bL20.